The chain runs to 480 residues: NADH-quinone oxidoreductase subunit N (480 aa).

Transmembrane regions (helical) follow at residues 12–32 (LLIP…LGVF), 41–61 (LVQW…LFLV), 80–100 (FSKT…MPYL), 105–125 (LGKI…MMMV), 130–150 (LIAM…LAAF), 165–185 (FVLG…VYGF), 204–224 (IGLT…VSAA), 237–257 (APTP…IVLL), 275–295 (VIWM…LTQQ), 300–320 (LMAY…AAAS), 326–346 (ALLV…ATIL), 372–392 (GWSM…VGFF), 406–428 (LMIL…LRIV), and 450–470 (IARI…WLVF).

This sequence belongs to the complex I subunit 2 family. NDH-1 is composed of 14 different subunits. Subunits NuoA, H, J, K, L, M, N constitute the membrane sector of the complex.

The protein resides in the cell inner membrane. The catalysed reaction is a quinone + NADH + 5 H(+)(in) = a quinol + NAD(+) + 4 H(+)(out). Functionally, NDH-1 shuttles electrons from NADH, via FMN and iron-sulfur (Fe-S) centers, to quinones in the respiratory chain. The immediate electron acceptor for the enzyme in this species is believed to be ubiquinone. Couples the redox reaction to proton translocation (for every two electrons transferred, four hydrogen ions are translocated across the cytoplasmic membrane), and thus conserves the redox energy in a proton gradient. In Maricaulis maris (strain MCS10) (Caulobacter maris), this protein is NADH-quinone oxidoreductase subunit N.